We begin with the raw amino-acid sequence, 384 residues long: Mannitol-1-phosphate 5-dehydrogenase (384 aa).

3–14 contacts NAD(+); the sequence is ALHFGAGNIGRG.

The protein belongs to the mannitol dehydrogenase family.

It carries out the reaction D-mannitol 1-phosphate + NAD(+) = beta-D-fructose 6-phosphate + NADH + H(+). This Clostridium acetobutylicum (strain ATCC 824 / DSM 792 / JCM 1419 / IAM 19013 / LMG 5710 / NBRC 13948 / NRRL B-527 / VKM B-1787 / 2291 / W) protein is Mannitol-1-phosphate 5-dehydrogenase (mtlD).